The primary structure comprises 331 residues: Centriolar satellite-associated tubulin polyglutamylase complex regulator 1 (331 aa).

Positions 1 to 111 (MLSPERLALP…HCLLQLLCPD (111 aa)) are required for interaction with PCM1. The tract at residues 1-225 (MLSPERLALP…SCPPPALVKE (225 aa)) is required for interaction with TPGS1, LRRC49, and TTLL1. A required for interaction with TPGS2 region spans residues 112–331 (FPLELTQKAA…STEETDESET (220 aa)). The interval 288 to 331 (SPEASCLPSRTPPRVGSPWRPLHHSRKVDGESDGSTEETDESET) is disordered. The span at 318 to 331 (ESDGSTEETDESET) shows a compositional bias: acidic residues. Position 319 is a phosphoserine (Ser319).

This sequence belongs to the CSTPP1 family. As to quaternary structure, interacts with PCM1. Interacts with TTLL1, TPGS1, TPGS2 and LRRC49; the interactions link CSTPP1 to the complex TPGC. Binds to alpha-tubulin.

The protein localises to the cytoplasm. The protein resides in the cytoskeleton. It localises to the microtubule organizing center. Its subcellular location is the centrosome. It is found in the centriolar satellite. In terms of biological role, regulator of the tubulin polyglutamylase complex (TPGC) that controls cytoskeletal organization, nuclear shape, and cilium disassembly by balancing microtubule and actin assembly. Regulates the assembly and stability of the TPGC and thereby modulates polyglutamylation of the microtubule, which antagonizes MAP4 binding. The protein is Centriolar satellite-associated tubulin polyglutamylase complex regulator 1 (CSTPP1) of Pongo abelii (Sumatran orangutan).